The chain runs to 184 residues: Large ribosomal subunit protein uL6 (184 aa).

This sequence belongs to the universal ribosomal protein uL6 family. In terms of assembly, part of the 50S ribosomal subunit.

Functionally, this protein binds to the 23S rRNA, and is important in its secondary structure. It is located near the subunit interface in the base of the L7/L12 stalk, and near the tRNA binding site of the peptidyltransferase center. The chain is Large ribosomal subunit protein uL6 from Salinibacter ruber (strain DSM 13855 / M31).